A 135-amino-acid chain; its full sequence is Large ribosomal subunit protein eL32 (135 aa).

Lys9 is covalently cross-linked (Glycyl lysine isopeptide (Lys-Gly) (interchain with G-Cter in SUMO2)). Position 50 is an N6-succinyllysine (Lys50). Ser62 is subject to Phosphoserine.

Belongs to the eukaryotic ribosomal protein eL32 family. Component of the large ribosomal subunit.

The protein resides in the cytoplasm. In terms of biological role, component of the large ribosomal subunit. The ribosome is a large ribonucleoprotein complex responsible for the synthesis of proteins in the cell. This is Large ribosomal subunit protein eL32 (RPL32) from Oryctolagus cuniculus (Rabbit).